A 260-amino-acid chain; its full sequence is Phosphoribosylaminoimidazole-succinocarboxamide synthase (260 aa).

This sequence belongs to the SAICAR synthetase family.

It catalyses the reaction 5-amino-1-(5-phospho-D-ribosyl)imidazole-4-carboxylate + L-aspartate + ATP = (2S)-2-[5-amino-1-(5-phospho-beta-D-ribosyl)imidazole-4-carboxamido]succinate + ADP + phosphate + 2 H(+). The protein operates within purine metabolism; IMP biosynthesis via de novo pathway; 5-amino-1-(5-phospho-D-ribosyl)imidazole-4-carboxamide from 5-amino-1-(5-phospho-D-ribosyl)imidazole-4-carboxylate: step 1/2. This is Phosphoribosylaminoimidazole-succinocarboxamide synthase from Pelagibacter ubique (strain HTCC1062).